We begin with the raw amino-acid sequence, 415 residues long: Ubp4-interactor sfp47 (415 aa).

Residues S221 and S226 each carry the phosphoserine modification. The residue at position 231 (T231) is a Phosphothreonine. At S235 the chain carries Phosphoserine. One can recognise an SH3 domain in the interval 352–415 (PIFAYVRALY…PSNYIEELEY (64 aa)).

As to quaternary structure, interacts with ubp4.

The protein localises to the cytoplasm. Its subcellular location is the endosome. Required for the regulation of activity and recruitment of ubp4 to endosomes. This Schizosaccharomyces pombe (strain 972 / ATCC 24843) (Fission yeast) protein is Ubp4-interactor sfp47 (sfp47).